The primary structure comprises 423 residues: Serine--tRNA ligase 2 (423 aa).

231 to 233 (TAE) contacts L-serine. Position 262 to 264 (262 to 264 (RSE)) interacts with ATP. Residue Glu285 participates in L-serine binding. Residue 349–352 (EISS) participates in ATP binding. Ser384 is an L-serine binding site.

Belongs to the class-II aminoacyl-tRNA synthetase family. Type-1 seryl-tRNA synthetase subfamily. Homodimer. The tRNA molecule binds across the dimer.

The protein localises to the cytoplasm. It carries out the reaction tRNA(Ser) + L-serine + ATP = L-seryl-tRNA(Ser) + AMP + diphosphate + H(+). The catalysed reaction is tRNA(Sec) + L-serine + ATP = L-seryl-tRNA(Sec) + AMP + diphosphate + H(+). Its pathway is aminoacyl-tRNA biosynthesis; selenocysteinyl-tRNA(Sec) biosynthesis; L-seryl-tRNA(Sec) from L-serine and tRNA(Sec): step 1/1. Catalyzes the attachment of serine to tRNA(Ser). Is also able to aminoacylate tRNA(Sec) with serine, to form the misacylated tRNA L-seryl-tRNA(Sec), which will be further converted into selenocysteinyl-tRNA(Sec). The protein is Serine--tRNA ligase 2 of Enterococcus faecalis (strain ATCC 700802 / V583).